The chain runs to 100 residues: Co-chaperonin GroES (100 aa).

This sequence belongs to the GroES chaperonin family. Heptamer of 7 subunits arranged in a ring. Interacts with the chaperonin GroEL.

It localises to the cytoplasm. Its function is as follows. Together with the chaperonin GroEL, plays an essential role in assisting protein folding. The GroEL-GroES system forms a nano-cage that allows encapsulation of the non-native substrate proteins and provides a physical environment optimized to promote and accelerate protein folding. GroES binds to the apical surface of the GroEL ring, thereby capping the opening of the GroEL channel. This chain is Co-chaperonin GroES, found in Mycolicibacterium vanbaalenii (strain DSM 7251 / JCM 13017 / BCRC 16820 / KCTC 9966 / NRRL B-24157 / PYR-1) (Mycobacterium vanbaalenii).